A 507-amino-acid polypeptide reads, in one-letter code: Nuclear distribution protein PAC1 (507 aa).

Residues 72 to 98 adopt a coiled-coil conformation; the sequence is STVLRLQRKIMDLTDEVSNLKTIIEAK. WD repeat units follow at residues 125–164, 170–222, 225–265, 268–312, 315–389, 410–449, and 474–507; these read QTHQ…PSIP, AHSR…QIRI, GHDH…CTRT, GHSD…GLCL, GHSH…VRPN, GHQS…TGGR, and PKDT…RLWS.

The protein belongs to the WD repeat LIS1/nudF family. Self-associates. Interacts with NDL1 and dynein.

It localises to the cytoplasm. It is found in the cytoskeleton. The protein localises to the spindle pole. Functionally, positively regulates the activity of the minus-end directed microtubule motor protein dynein. Plays a central role in positioning the mitotic spindle at the bud neck during cell division. Targets cytoplasmic dynein to microtubule plus ends, thereby promoting dynein-mediated microtubule sliding along the bud cortex and consequently the movement of the mitotic spindle to the bud neck. This is Nuclear distribution protein PAC1 from Meyerozyma guilliermondii (strain ATCC 6260 / CBS 566 / DSM 6381 / JCM 1539 / NBRC 10279 / NRRL Y-324) (Yeast).